A 367-amino-acid chain; its full sequence is Cell division protein FtsZ (367 aa).

GTP-binding positions include 17–21, 104–106, Glu135, Lys139, and Asp183; these read GGGSN and GTG.

The protein belongs to the FtsZ family. Homodimer. Polymerizes to form a dynamic ring structure in a strictly GTP-dependent manner. Interacts directly with several other division proteins.

Its subcellular location is the cytoplasm. Its function is as follows. Essential cell division protein that forms a contractile ring structure (Z ring) at the future cell division site. The regulation of the ring assembly controls the timing and the location of cell division. One of the functions of the FtsZ ring is to recruit other cell division proteins to the septum to produce a new cell wall between the dividing cells. Binds GTP and shows GTPase activity. In Aquifex aeolicus (strain VF5), this protein is Cell division protein FtsZ.